The chain runs to 175 residues: R-phycoerythrin subunit beta (175 aa).

Cys-82 is a (2R,3E)-phycoerythrobilin binding site.

Belongs to the phycobiliprotein family. Homodimer. Contains one covalently linked phycoerythrobilin chromophore.

Its function is as follows. Green-light absorbing phycoerythrin of unknown function. This is R-phycoerythrin subunit beta (cpeB) from Prochlorococcus marinus subsp. pastoris (strain CCMP1986 / NIES-2087 / MED4).